The sequence spans 170 residues: Adenine phosphoribosyltransferase (170 aa).

The protein belongs to the purine/pyrimidine phosphoribosyltransferase family. As to quaternary structure, homodimer.

It is found in the cytoplasm. It catalyses the reaction AMP + diphosphate = 5-phospho-alpha-D-ribose 1-diphosphate + adenine. Its pathway is purine metabolism; AMP biosynthesis via salvage pathway; AMP from adenine: step 1/1. In terms of biological role, catalyzes a salvage reaction resulting in the formation of AMP, that is energically less costly than de novo synthesis. This Cenarchaeum symbiosum (strain A) protein is Adenine phosphoribosyltransferase.